We begin with the raw amino-acid sequence, 463 residues long: L-seryl-tRNA(Sec) selenium transferase (463 aa).

Lysine 295 bears the N6-(pyridoxal phosphate)lysine mark.

The protein belongs to the SelA family. Homodecamer; pentamer of dimers. Binds only one seryl-tRNA(Sec) per dimer. It depends on pyridoxal 5'-phosphate as a cofactor.

Its subcellular location is the cytoplasm. It catalyses the reaction L-seryl-tRNA(Sec) + selenophosphate + H(+) = L-selenocysteinyl-tRNA(Sec) + phosphate. Its pathway is aminoacyl-tRNA biosynthesis; selenocysteinyl-tRNA(Sec) biosynthesis; selenocysteinyl-tRNA(Sec) from L-seryl-tRNA(Sec) (bacterial route): step 1/1. Its function is as follows. Converts seryl-tRNA(Sec) to selenocysteinyl-tRNA(Sec) required for selenoprotein biosynthesis. This chain is L-seryl-tRNA(Sec) selenium transferase, found in Shigella flexneri serotype 5b (strain 8401).